The primary structure comprises 170 residues: Probable T4-type lysozyme 1 (170 aa).

E13 serves as the catalytic Proton donor. D22 serves as the catalytic Nucleophile.

The protein belongs to the glycosyl hydrolase 24 family.

It catalyses the reaction Hydrolysis of (1-&gt;4)-beta-linkages between N-acetylmuramic acid and N-acetyl-D-glucosamine residues in a peptidoglycan and between N-acetyl-D-glucosamine residues in chitodextrins.. The polypeptide is Probable T4-type lysozyme 1 (Dictyostelium discoideum (Social amoeba)).